Consider the following 200-residue polypeptide: Dual specificity tyrosine-phosphorylation-regulated kinase 1A (200 aa).

Tyr-41 carries the phosphotyrosine; by autocatalysis modification. An ATP-binding site is contributed by Lys-58. Tyr-76 is subject to Phosphotyrosine; by autocatalysis. At Ser-88 the chain carries Phosphoserine; by autocatalysis. Thr-122 is modified (phosphothreonine; by autocatalysis).

This sequence belongs to the protein kinase superfamily. CMGC Ser/Thr protein kinase family. MNB/DYRK subfamily. In terms of assembly, interacts with RAD54L2/ARIP4. Interacts with CRY2. Interacts with RANBP9. Interacts with WDR68. Interacts with SIRT1. Can also autophosphorylate on serine and threonine residues (in vitro). Autophosphorylated on numerous tyrosine residues.

The protein localises to the nucleus. The enzyme catalyses L-tyrosyl-[protein] + ATP = O-phospho-L-tyrosyl-[protein] + ADP + H(+). The catalysed reaction is L-seryl-[protein] + ATP = O-phospho-L-seryl-[protein] + ADP + H(+). It carries out the reaction L-threonyl-[protein] + ATP = O-phospho-L-threonyl-[protein] + ADP + H(+). It catalyses the reaction [DNA-directed RNA polymerase] + ATP = phospho-[DNA-directed RNA polymerase] + ADP + H(+). Its activity is regulated as follows. Inhibited by RANBP9. Dual-specificity kinase which possesses both serine/threonine and tyrosine kinase activities. Exhibits a substrate preference for proline at position P+1 and arginine at position P-3. Plays an important role in double-strand breaks (DSBs) repair following DNA damage. Mechanistically, phosphorylates RNF169 and increases its ability to block accumulation of TP53BP1 at the DSB sites thereby promoting homologous recombination repair (HRR). Also acts as a positive regulator of transcription by acting as a CTD kinase that mediates phosphorylation of the CTD (C-terminal domain) of the large subunit of RNA polymerase II (RNAP II) POLR2A. May play a role in a signaling pathway regulating nuclear functions of cell proliferation. Modulates alternative splicing by phosphorylating the splice factor SRSF6. Has pro-survival function and negatively regulates the apoptotic process. Promotes cell survival upon genotoxic stress through phosphorylation of SIRT1. This in turn inhibits p53/TP53 activity and apoptosis. Phosphorylates SEPTIN4, SEPTIN5 and SF3B1 at 'Thr-434'. This is Dual specificity tyrosine-phosphorylation-regulated kinase 1A from Oryctolagus cuniculus (Rabbit).